Here is a 326-residue protein sequence, read N- to C-terminus: Ig gamma-1 chain C region (326 aa).

A CH1 region spans residues 1–97 (AETTAPSVYP…ASSTKVDKKI (97 aa)). The cysteines at positions 27 and 82 are disulfide-linked. Positions 98-112 (VPRNCGGDCKPCICT) are hinge. The CH2 stretch occupies residues 113–219 (GSEVSSVFIF…PIEKTISKPE (107 aa)). Intrachain disulfides connect cysteine 140–cysteine 200 and cysteine 246–cysteine 304. Asparagine 176 carries N-linked (GlcNAc...) asparagine glycosylation. The segment at 220–326 (GRTQVPHVYT…EKSLSHSPGK (107 aa)) is CH3.

This is Ig gamma-1 chain C region from Rattus norvegicus (Rat).